Reading from the N-terminus, the 467-residue chain is UDP-N-acetylmuramate--L-alanine ligase (467 aa).

112–118 (GTHGKTT) is a binding site for ATP.

The protein belongs to the MurCDEF family.

It localises to the cytoplasm. The enzyme catalyses UDP-N-acetyl-alpha-D-muramate + L-alanine + ATP = UDP-N-acetyl-alpha-D-muramoyl-L-alanine + ADP + phosphate + H(+). It participates in cell wall biogenesis; peptidoglycan biosynthesis. Its function is as follows. Cell wall formation. In Paraburkholderia phytofirmans (strain DSM 17436 / LMG 22146 / PsJN) (Burkholderia phytofirmans), this protein is UDP-N-acetylmuramate--L-alanine ligase.